We begin with the raw amino-acid sequence, 254 residues long: Chymotrypsin-like serine proteinase (254 aa).

An N-terminal signal peptide occupies residues Met1–Ala18. Residues Glu19–Asn23 constitute a propeptide, activation peptide. The 231-residue stretch at Ile24–Gln254 folds into the Peptidase S1 domain. A disulfide bridge connects residues Cys53 and Cys69. Catalysis depends on charge relay system residues His68 and Asp117. 3 cysteine pairs are disulfide-bonded: Cys146-Cys218, Cys181-Cys199, and Cys208-Cys233. Ser212 serves as the catalytic Charge relay system.

It belongs to the peptidase S1 family. In terms of assembly, monomer. Expressed specifically in the distal quarter of the intestine.

It localises to the secreted. The protein resides in the extracellular space. Its activity is regulated as follows. Activated by an autocatalytic mechanism. In terms of biological role, specificity similar to chymotrypsin. The chain is Chymotrypsin-like serine proteinase from Haliotis rufescens (California red abalone).